Reading from the N-terminus, the 563-residue chain is Alpha-humulene synthase (563 aa).

Positions 316, 320, 461, and 469 each coordinate Mg(2+). Positions 316-320 match the DDXXD motif motif; sequence DDIYD.

Belongs to the terpene synthase family. Tpsa subfamily. The cofactor is Mg(2+). Requires Mn(2+) as cofactor. As to expression, expressed in trichomes, cones and young leaves.

The catalysed reaction is (2E,6E)-farnesyl diphosphate = alpha-humulene + diphosphate. The protein operates within sesquiterpene biosynthesis. It participates in secondary metabolite biosynthesis; terpenoid biosynthesis. Functionally, sesquiterpene synthase that catalyzes the formation of alpha-humulene. Can use farnesyl diphosphate (FPP) as substrate, but not geranyl diphosphate (GPP) or geranylgeranyl diphosphate (GGPP). This chain is Alpha-humulene synthase, found in Humulus lupulus (European hop).